The chain runs to 465 residues: Iron-sulfur cluster assembly SufBD family protein SAR0880 (465 aa).

Belongs to the iron-sulfur cluster assembly SufBD family.

The polypeptide is Iron-sulfur cluster assembly SufBD family protein SAR0880 (Staphylococcus aureus (strain MRSA252)).